A 370-amino-acid polypeptide reads, in one-letter code: 3-dehydroquinate synthase (370 aa).

Residues 112 to 116 (GVIGD), 136 to 137 (TT), Lys149, Lys158, and 176 to 179 (TLAT) contribute to the NAD(+) site. Zn(2+)-binding residues include Glu191, His254, and His276.

It belongs to the sugar phosphate cyclases superfamily. Dehydroquinate synthase family. Co(2+) is required as a cofactor. The cofactor is Zn(2+). Requires NAD(+) as cofactor.

It localises to the cytoplasm. The enzyme catalyses 7-phospho-2-dehydro-3-deoxy-D-arabino-heptonate = 3-dehydroquinate + phosphate. Its pathway is metabolic intermediate biosynthesis; chorismate biosynthesis; chorismate from D-erythrose 4-phosphate and phosphoenolpyruvate: step 2/7. Its function is as follows. Catalyzes the conversion of 3-deoxy-D-arabino-heptulosonate 7-phosphate (DAHP) to dehydroquinate (DHQ). The protein is 3-dehydroquinate synthase of Xylella fastidiosa (strain M12).